The following is a 156-amino-acid chain: SCP2 sterol-binding domain-containing protein 1 (156 aa).

In terms of domain architecture, SCP2 spans 44–156; the sequence is TVPVFEDISQ…ERVFKDWAKW (113 aa).

The protein is SCP2 sterol-binding domain-containing protein 1 (SCP2D1) of Bos taurus (Bovine).